The chain runs to 424 residues: MKLEMICTGEEVLAGQIVDTNAAWFANMLMEHGVECQRRITVGDRLEDLVAVFQERSTEADVIVVNGGLGPTSDDLSSEAMALAKGEPLVENKIWRDRLDDWFTRNGRVMAESNLKQALIPESAIMIDNPVGTACGFAVKLNRAWLFFTPGVPFEFKQMIKEQFIPFINERFEIAGDVALRKYLTLGQGESSLADALETIVLPEGITIGYRSSMPHIEIKLFARGKAAISEMDKIEAQIRFLLGTAIVANNKKSLAEEIHALLIDSGKTLSAAESCTGGMIASQLISHAGSSAYLDQGLVTYSNESKVKVLGVKPETLDDHGAVSIATVEEMASGARAILNSDYALATSGIAGPTGGTEDKPVGTVAIALATKSGVYSQMIKLPRRSRDLVRSLSTAVAFDMLRRELLDEAVIVDYGSIKRFQK.

It belongs to the CinA family.

The protein is CinA-like protein of Shewanella piezotolerans (strain WP3 / JCM 13877).